Here is a 112-residue protein sequence, read N- to C-terminus: uncharacterized protein (112 aa).

The segment at 90–112 is disordered; sequence KNFNNSKNDQIKKKKIDNNQVNL.

This is an uncharacterized protein from Buchnera aphidicola subsp. Acyrthosiphon pisum (strain APS) (Acyrthosiphon pisum symbiotic bacterium).